Reading from the N-terminus, the 154-residue chain is Protein X (154 aa).

The tract at residues Pro-68–Phe-117 is mitochondrial targeting sequence.

Belongs to the orthohepadnavirus protein X family. May form homodimer. May interact with host CEBPA, CFLAR, CREB1, DDB1, E4F1, HBXIP, HSPD1/HSP60, NFKBIA, POLR2E and SMAD4. Interacts with host SMC5-SMC6 complex and induces its degradation. Interacts with host TRPC4AP; leading to prevent ubiquitination of TRPC4AP. Interacts with host PLSCR1; this interaction promotes ubiquitination and degradation of HBx and impairs HBx-mediated cell proliferation. A fraction may be phosphorylated in insect cells and HepG2 cells, a human hepatoblastoma cell line. Phosphorylated in vitro by host protein kinase C or mitogen-activated protein kinase. N-acetylated in insect cells.

The protein resides in the host cytoplasm. The protein localises to the host nucleus. Its subcellular location is the host mitochondrion. Functionally, multifunctional protein that plays a role in silencing host antiviral defenses and promoting viral transcription. Does not seem to be essential for HBV infection. May be directly involved in development of cirrhosis and liver cancer (hepatocellular carcinoma). Most of cytosolic activities involve modulation of cytosolic calcium. The effect on apoptosis is controversial depending on the cell types in which the studies have been conducted. May induce apoptosis by localizing in mitochondria and causing loss of mitochondrial membrane potential. May also modulate apoptosis by binding host CFLAR, a key regulator of the death-inducing signaling complex (DISC). Promotes viral transcription by using the host E3 ubiquitin ligase DDB1 to target the SMC5-SMC6 complex to proteasomal degradation. This host complex would otherwise bind to viral episomal DNA, and prevents its transcription. Moderately stimulates transcription of many different viral and cellular transcription elements. Promoters and enhancers stimulated by HBx contain DNA binding sites for NF-kappa-B, AP-1, AP-2, c-EBP, ATF/CREB, or the calcium-activated factor NF-AT. The protein is Protein X of Hepatitis B virus genotype E (isolate Chimpanzee/Ch195/1999) (HBV-E).